Here is a 257-residue protein sequence, read N- to C-terminus: Beta-fibrinogenase mucrofibrase-1 (257 aa).

Positions 1 to 18 (MVLIRVLANLLILQLSYA) are cleaved as a signal peptide. A propeptide spanning residues 19-24 (QKSSEL) is cleaved from the precursor. Positions 25 to 248 (VIGGDECNIN…HLDWIKGIIA (224 aa)) constitute a Peptidase S1 domain. Intrachain disulfides connect cysteine 31-cysteine 162, cysteine 49-cysteine 65, cysteine 97-cysteine 255, cysteine 141-cysteine 209, cysteine 173-cysteine 188, and cysteine 199-cysteine 224. Active-site charge relay system residues include histidine 64 and aspartate 109. Catalysis depends on serine 203, which acts as the Charge relay system.

This sequence belongs to the peptidase S1 family. Snake venom subfamily. In terms of assembly, monomer. As to expression, expressed by the venom gland.

The protein resides in the secreted. Functionally, snake venom serine protease with strong beta-fibrinogenolytic activities, angiotensin I (AGT)-degrading activities and strong kallikrein-like activities in vitro, releasing bradykinin from kininogen (KNG1). Intravenous injection strongly lowers blood pressure in experimental rats, which may be explained by the action on angiotensin I and kininogen. This chain is Beta-fibrinogenase mucrofibrase-1, found in Protobothrops mucrosquamatus (Taiwan habu).